The following is an 88-amino-acid chain: Small ribosomal subunit protein bS20 (88 aa).

Residues 1 to 27 (MANTKQAQKRARQAEQRRQHNASQRSM) are disordered.

Belongs to the bacterial ribosomal protein bS20 family.

Its function is as follows. Binds directly to 16S ribosomal RNA. This Chromohalobacter salexigens (strain ATCC BAA-138 / DSM 3043 / CIP 106854 / NCIMB 13768 / 1H11) protein is Small ribosomal subunit protein bS20.